We begin with the raw amino-acid sequence, 627 residues long: Plastin-3 (627 aa).

EF-hand domains are found at residues glutamate 8–proline 43 and lysine 48–glycine 83. 9 residues coordinate Ca(2+): aspartate 21, asparagine 23, asparagine 25, glutamate 32, aspartate 61, asparagine 63, aspartate 65, methionine 67, and glutamate 72. Actin-binding regions lie at residues threonine 105 to lysine 378 and proline 379 to methionine 624. Calponin-homology (CH) domains follow at residues glutamate 119 to leucine 235, leucine 263 to proline 374, threonine 393 to threonine 503, and lysine 515 to methionine 624.

Its subcellular location is the cytoplasm. Actin-bundling protein. This is Plastin-3 (pls3) from Danio rerio (Zebrafish).